The sequence spans 271 residues: Serine protease SP24D (271 aa).

An N-terminal signal peptide occupies residues 1 to 22 (MTLADRVPLALAALAYLALVSG). Positions 23–49 (VRFHLSEQNDVLPGGSQARRPFFQGAR) are cleaved as a propeptide — activation peptide. The Peptidase S1 domain maps to 50-269 (IVGGSVASEG…FVTWIQTTMR (220 aa)). Residues cysteine 75 and cysteine 91 are joined by a disulfide bond. Active-site charge relay system residues include histidine 90 and aspartate 136. Intrachain disulfides connect cysteine 199-cysteine 211 and cysteine 221-cysteine 246. Catalysis depends on serine 225, which acts as the Charge relay system.

The protein belongs to the peptidase S1 family. Highest level of adult expression is in the thorax.

The chain is Serine protease SP24D (Sp24D) from Anopheles gambiae (African malaria mosquito).